A 113-amino-acid polypeptide reads, in one-letter code: Putative membrane protein insertion efficiency factor (113 aa).

Belongs to the UPF0161 family.

The protein localises to the cell inner membrane. Functionally, could be involved in insertion of integral membrane proteins into the membrane. This is Putative membrane protein insertion efficiency factor from Campylobacter jejuni subsp. jejuni serotype O:2 (strain ATCC 700819 / NCTC 11168).